Here is a 221-residue protein sequence, read N- to C-terminus: Protein RER1D (221 aa).

4 helical membrane passes run 41 to 58 (IVRRWLVTLVAAVIYIYR), 64 to 84 (GYFVISYGLATYILNLLIGFL), 128 to 148 (FVVAFVMTFFSFLDVPVFWPI), and 149 to 169 (LLCYWLVLYSLTMKRLIVHMF). The tract at residues 200-221 (KGDGGDDRPSSSNSSQGNEKQD) is disordered. Residues 209-221 (SSSNSSQGNEKQD) show a composition bias toward polar residues.

It belongs to the RER1 family.

It is found in the membrane. Functionally, involved in the retrieval of endoplasmic reticulum membrane proteins from the early Golgi compartment. This Arabidopsis thaliana (Mouse-ear cress) protein is Protein RER1D.